A 128-amino-acid chain; its full sequence is Large ribosomal subunit protein bL12 (128 aa).

This sequence belongs to the bacterial ribosomal protein bL12 family. As to quaternary structure, homodimer. Part of the ribosomal stalk of the 50S ribosomal subunit. Forms a multimeric L10(L12)X complex, where L10 forms an elongated spine to which 2 to 4 L12 dimers bind in a sequential fashion. Binds GTP-bound translation factors.

Functionally, forms part of the ribosomal stalk which helps the ribosome interact with GTP-bound translation factors. Is thus essential for accurate translation. This is Large ribosomal subunit protein bL12 from Acidithiobacillus ferrooxidans (strain ATCC 23270 / DSM 14882 / CIP 104768 / NCIMB 8455) (Ferrobacillus ferrooxidans (strain ATCC 23270)).